The primary structure comprises 228 residues: Eukaryotic translation initiation factor 4E-1 (228 aa).

The segment covering 1 to 19 has biased composition (basic and acidic residues); it reads MATAEMEKTTTFDEAEKVK. The segment at 1–33 is disordered; sequence MATAEMEKTTTFDEAEKVKLNANEADDEVEEGE. The span at 24-33 shows a compositional bias: acidic residues; the sequence is EADDEVEEGE. EIF4G-binding stretches follow at residues 53-56 and 63-99; these read HPLE and FDNP…NNIH. MRNA is bound by residues 71 to 76, K103, and 121 to 122; these read KQAAWG and WE. A disulfide bond links C126 and C164. The segment at 147–156 is EIF4G-binding; that stretch reads YTLLAMIGHQ. MRNA contacts are provided by residues 171–176 and 216–220; these read RGKGEK and KRLDR.

The protein belongs to the eukaryotic initiation factor 4E family. In terms of assembly, EIF4F is a multi-subunit complex, the composition of which varies with external and internal environmental conditions. It is composed of at least EIF4A, EIF4E and EIF4G. EIF4E is also known to interact with other partners. In higher plants two isoforms of EIF4F have been identified, named isoform EIF4F and isoform EIF(iso)4F. Isoform EIF4F has subunits p220 and p26, whereas isoform EIF(iso)4F has subunits p82 and p28. As to quaternary structure, (Microbial infection) Interacts with potyvirus viral genome-linked protein (VPg); this interaction is possible in susceptible hosts but is impaired in resistant plants. Thus the VPg of tobacco etch virus (TEV) strain HAT interacts with susceptible alleles pvr2(+), pvr2(3) and pvr2(9) but not with the resistant allele pvr2(2), the VPg of TEV strain CAA10 interacts with susceptible alleles pvr2(+), pvr2(2), pvr2(3) and pvr2(9), the VPg of potato virus Y (PVY) strain LYE84 interacts with tomato eIF4E1 and eIF4E2 as well as with the Capsicum annuum eIF4E1 susceptible allele pvr2(+) but not with resistant alleles pvr2(1), pvr2(2), pvr2(3), pvr2(4), pvr2(5), pvr2(6), pvr2(7), pvr2(8) and pvr2(9) and the VPg of PVY strain SON41 interacts with C.annuum eIF4E1 susceptible alleles pvr2(+), pvr2(1), pvr2(2), pvr2(3) and pvr2(4) but not with resistant alleles pvr2(5), pvr2(6), pvr2(7), pvr2(8) and pvr2(9). In addition, the susceptible allele pvr1(+) interacts strongly with TEV strains HAT and NW VPg while resistance alleles (pvr1, pvr1(1), and pvr1(2)) fail to bind TEV VPg. In terms of processing, according to the redox status, the Cys-126-Cys-164 disulfide bridge may have a role in regulating protein function by affecting its ability to bind capped mRNA.

Its subcellular location is the nucleus. The protein resides in the cytoplasm. In terms of biological role, component of the protein complex eIF4F, which is involved in the recognition of the mRNA cap, ATP-dependent unwinding of 5'-terminal secondary structure and recruitment of mRNA to the ribosome. Recognizes and binds the 7-methylguanosine-containing mRNA cap during an early step in the initiation of protein synthesis and facilitates ribosome binding by inducing the unwinding of the mRNAs secondary structures. Key component of recessive resistance to potyviruses. (Microbial infection) Susceptibility host factor required for viral infection (e.g. potato virus Y (PVY) and tobacco etch virus (TEV)) by recruiting viral RNAs to the host ribosomal complex via an interaction with viral genome-linked protein (VPg). The protein is Eukaryotic translation initiation factor 4E-1 of Capsicum annuum (Capsicum pepper).